The primary structure comprises 382 residues: 6-oxocyclohex-1-ene-1-carbonyl-CoA hydrolase (382 aa).

The protein belongs to the enoyl-CoA hydratase/isomerase family. In terms of assembly, homohexamer.

It carries out the reaction 6-oxocyclohex-1-ene-1-carbonyl-CoA + 2 H2O = 3-hydroxy-6-carboxyhexanoyl-CoA + H(+). The protein operates within aromatic compound metabolism; benzoyl-CoA degradation. Involved in the central benzoyl-CoA catabolism. Catalyzes the addition of one molecule of water to the double bond and the hydrolytic cleavage of C-C bond in the alicyclic ring, 6-oxocyclohex-1-ene-1-carbonyl-CoA (6-OCH-CoA) to yield 3-hydroxypimelyl-CoA. This chain is 6-oxocyclohex-1-ene-1-carbonyl-CoA hydrolase, found in Syntrophus aciditrophicus (strain SB).